A 403-amino-acid chain; its full sequence is MPIQPFDQREWNEPMHSLRISVGGLPVLASMTKATDPRFRPRWRVILTSFVGAALLWLLYSHHQGPVPGRPPTHNAHNWRLSQQRISHYNDTYPLSPPQRTPGGIRYRIAVIADLDTGSRAQEENTWFSYLKKGYLTLSDSGDRVSVEWDKDHGVLESHLAEKGRGMELSDLIVFNGKLYSVDDRTGVIYQIEGTKAVPWVILSDGDGTVEKGFKAEWLAVKDEHLYVGGLGKEWTTTTGEVMNENPEWVKVVGHRGSVDHENWVSSYNALRAAAGIRPPGYLIHESACWSDTLQRWFFLPRRASHERYSEKDDERKGSNLLLSAAQDFRDISVRQVGTLIPTHGFSSFKFIPNTDDQIIVALKSEEDNGRIATYVMAFTLDGRFLLPETKIGTVKYEGIEFI.

Residues 1–44 (MPIQPFDQREWNEPMHSLRISVGGLPVLASMTKATDPRFRPRWR) lie on the Cytoplasmic side of the membrane. The helical; Signal-anchor for type II membrane protein transmembrane segment at 45–61 (VILTSFVGAALLWLLYS) threads the bilayer. The Lumenal segment spans residues 62-403 (HHQGPVPGRP…TVKYEGIEFI (342 aa)). Asn-90 is a glycosylation site (N-linked (GlcNAc...) asparagine). 6 residues coordinate Ca(2+): Ser-170, Asp-171, Glu-217, Glu-286, Ser-347, and Glu-398.

It belongs to the apyrase family. In terms of assembly, monomer. Homodimer; dimerization is Ca(2+)-dependent. The cofactor is Ca(2+).

It localises to the endoplasmic reticulum membrane. Its subcellular location is the golgi apparatus. It is found in the golgi stack membrane. It carries out the reaction a ribonucleoside 5'-diphosphate + H2O = a ribonucleoside 5'-phosphate + phosphate + H(+). Calcium-dependent nucleotidase with a preference for UDP. The order of activity with different substrates is UDP &gt; GDP &gt; IDP &gt;&gt; UTP &gt; CDP = GTP = ITP. Has very low activity towards ADP and even lower activity towards ATP. Does not hydrolyze AMP and GMP. Involved in proteoglycan synthesis. The chain is Soluble calcium-activated nucleotidase 1 (Cant1) from Mus musculus (Mouse).